Reading from the N-terminus, the 464-residue chain is Methylenetetrahydrofolate--tRNA-(uracil-5-)-methyltransferase TrmFO (464 aa).

13-18 (GGGLAG) contacts FAD.

This sequence belongs to the MnmG family. TrmFO subfamily. FAD is required as a cofactor.

The protein resides in the cytoplasm. It catalyses the reaction uridine(54) in tRNA + (6R)-5,10-methylene-5,6,7,8-tetrahydrofolate + NADH + H(+) = 5-methyluridine(54) in tRNA + (6S)-5,6,7,8-tetrahydrofolate + NAD(+). The enzyme catalyses uridine(54) in tRNA + (6R)-5,10-methylene-5,6,7,8-tetrahydrofolate + NADPH + H(+) = 5-methyluridine(54) in tRNA + (6S)-5,6,7,8-tetrahydrofolate + NADP(+). Its function is as follows. Catalyzes the folate-dependent formation of 5-methyl-uridine at position 54 (M-5-U54) in all tRNAs. In Bartonella bacilliformis (strain ATCC 35685 / KC583 / Herrer 020/F12,63), this protein is Methylenetetrahydrofolate--tRNA-(uracil-5-)-methyltransferase TrmFO.